Consider the following 348-residue polypeptide: MSKQTLVLLYGGRSAEREVSVLSAESVMRAVNYDKFLVKTYFITQMGQFIKTQQFSEKPSESERLMTNETIELTQKIKPSDIYEEGAVVFPVLHGPMGEDGSIQGFLEVLRMPYIGTNVMSSSIAMDKITTKRVLESIGIPQVAYTVYIDGQDLEACLVETLARLTFPIFVKPANMGSSVGISKAQTKVELRKAIQLALTYDSRVLIEQGVVAREIEVGLLGNDKVKSTLPGEVIKDVDFYDYQAKYVDNKITMAIPADVDQSIVTEMRSYAEVAFKALGGCGLSRCDFFLTQDGQVYLNELNTMPGFTQWSMYPLLWENMGLAYPDLIEELVTLAQEMFDQRESHLI.

Positions 132–334 (KRVLESIGIP…YPDLIEELVT (203 aa)) constitute an ATP-grasp domain. 162 to 217 (LARLTFPIFVKPANMGSSVGISKAQTKVELRKAIQLALTYDSRVLIEQGVVAREIE) contacts ATP. 3 residues coordinate Mg(2+): Asp288, Glu301, and Asn303.

Belongs to the D-alanine--D-alanine ligase family. It depends on Mg(2+) as a cofactor. Requires Mn(2+) as cofactor.

The protein resides in the cytoplasm. It catalyses the reaction 2 D-alanine + ATP = D-alanyl-D-alanine + ADP + phosphate + H(+). It participates in cell wall biogenesis; peptidoglycan biosynthesis. Functionally, cell wall formation. The polypeptide is D-alanine--D-alanine ligase (Streptococcus pyogenes serotype M12 (strain MGAS2096)).